Here is a 94-residue protein sequence, read N- to C-terminus: Small ribosomal subunit protein bS6 (94 aa).

It belongs to the bacterial ribosomal protein bS6 family.

Functionally, binds together with bS18 to 16S ribosomal RNA. This chain is Small ribosomal subunit protein bS6, found in Clostridium botulinum (strain Hall / ATCC 3502 / NCTC 13319 / Type A).